We begin with the raw amino-acid sequence, 685 residues long: Allergen Cr-PI (685 aa).

The first 16 residues, 1–16 (MKTALVFAAVVAFVAA), serve as a signal peptide directing secretion. N233 carries N-linked (GlcNAc...) asparagine glycosylation.

It belongs to the hemocyanin family.

The protein localises to the secreted. The protein resides in the extracellular space. Functionally, larval storage protein (LSP) which may serve as a store of amino acids for synthesis of adult proteins. The polypeptide is Allergen Cr-PI (Periplaneta americana (American cockroach)).